A 4911-amino-acid chain; its full sequence is MSSEEDKSVEQPQPPPPPPEEPGAPAPSPAAADKRPRGRPRKDGASPFQRARKKPRSRGKTAVEDEDSMDGLETTETETIVETEIKEQSAEEDAEAEVDNSKQLIPTLQRSVSEESANSLVSVGVEAKISEQLCAFCYCGEKSSLGQGDLKQFRITPGFILPWRNQPSNKKDIDDNSNGTYEKMQNSAPRKQRGQRKERSPQQNIVSCVSVSTQTASDDQAGKLWDELSLVGLPDAIDIQALFDSTGTCWAHHRCVEWSLGVCQMEEPLLVNVDKAVVSGSTERCAFCKHLGATIKCCEEKCTQMYHYPCAAGAGTFQDFSHIFLLCPEHIDQAPERSKEDANCAVCDSPGDLLDQFFCTTCGQHYHGMCLDIAVTPLKRAGWQCPECKVCQNCKQSGEDSKMLVCDTCDKGYHTFCLQPVMKSVPTNGWKCKNCRICIECGTRSSSQWHHNCLICDNCYQQQDNLCPFCGKCYHPELQKDMLHCNMCKRWVHLECDKPTDHELDTQLKEEYICMYCKHLGAEMDRLQPGEEVEIAELTTDYNNEMEVEGPEDQMVFSEQAANKDVNGQESTPGIVPDAVQVHTEEQQKSHPSESLDTDSLLIAVSSQHTVNTELEKQISNEVDSEDLKMSSEVKHICGEDQIEDKMEVTENIEVVTHQITVQQEQLQLLEEPETVVSREESRPPKLVMESVTLPLETLVSPHEESISLCPEEQLVIERLQGEKEQKENSELSTGLMDSEMTPTIEGCVKDVSYQGGKSIKLSSETESSFSSSADISKADVSSSPTPSSDLPSHDMLHNYPSALSSSAGNIMPTTYISVTPKIGMGKPAITKRKFSPGRPRSKQGAWSTHNTVSPPSWSPDISEGREIFKPRQLPGSAIWSIKVGRGSGFPGKRRPRGAGLSGRGGRGRSKLKSGIGAVVLPGVSTADISSNKDDEENSMHNTVVLFSSSDKFTLNQDMCVVCGSFGQGAEGRLLACSQCGQCYHPYCVSIKITKVVLSKGWRCLECTVCEACGKATDPGRLLLCDDCDISYHTYCLDPPLQTVPKGGWKCKWCVWCRHCGATSAGLRCEWQNNYTQCAPCASLSSCPVCYRNYREEDLILQCRQCDRWMHAVCQNLNTEEEVENVADIGFDCSMCRPYMPASNVPSSDCCESSLVAQIVTKVKELDPPKTYTQDGVCLTESGMTQLQSLTVTVPRRKRSKPKLKLKIINQNSVAVLQTPPDIQSEHSRDGEMDDSREGELMDCDGKSESSPEREAVDDETKGVEGTDGVKKRKRKPYRPGIGGFMVRQRSRTGQGKTKRSVIRKDSSGSISEQLPCRDDGWSEQLPDTLVDESVSVTESTEKIKKRYRKRKNKLEETFPAYLQEAFFGKDLLDTSRQSKISLDNLSEDGAQLLYKTNMNTGFLDPSLDPLLSSSSAPTKSGTHGPADDPLADISEVLNTDDDILGIISDDLAKSVDHSDIGPVTDDPSSLPQPNVNQSSRPLSEEQLDGILSPELDKMVTDGAILGKLYKIPELGGKDVEDLFTAVLSPANTQPTPLPQPPPPTQLLPIHNQDAFSRMPLMNGLIGSSPHLPHNSLPPGSGLGTFSAIAQSSYPDARDKNSAFNPMASDPNNSWTSSAPTVEGENDTMSNAQRSTLKWEKEEALGEMATVAPVLYTNINFPNLKEEFPDWTTRVKQIAKLWRKASSQERAPYVQKARDNRAALRINKVQMSNDSMKRQQQQDSIDPSSRIDSELFKDPLKQRESEHEQEWKFRQQMRQKSKQQAKIEATQKLEQVKNEQQQQQQQQFGSQHLLVQSGSDTPSSGIQSPLTPQPGNGNMSPAQSFHKELFTKQPPSTPTSTSSDDVFVKPQAPPPPPAPSRIPIQDSLSQAQTSQPPSPQVFSPGSSNSRPPSPMDPYAKMVGTPRPPPVGHSFSRRNSAAPVENCTPLSSVSRPLQMNETTANRPSPVRDLCSSSTTNNDPYAKPPDTPRPVMTDQFPKSLGLSRSPVVSEQTAKGPIAAGTSDHFTKPSPRADVFQRQRIPDSYARPLLTPAPLDSGPGPFKTPMQPPPSSQDPYGSVSQASRRLSVDPYERPALTPRPIDNFSHNQSNDPYSQPPLTPHPAVNESFAHPSRAFSQPGTISRPTSQDPYSQPPGTPRPVVDSYSQSSGTARSNTDPYSQPPGTPRPTTVDPYSQQPQTPRPSTQTDLFVTPVTNQRHSDPYAHPPGTPRPGISVPYSQPPATPRPRISEGFTRSSMTRPVLMPNQDPFLQAAQNRGPALPGPLVRPPDTCSQTPRPPGPGLSDTFSRVSPSAARDPYDQSPMTPRSQSDSFGTSQTAHDVADQPRPGSEGSFCASSNSPMHSQGQQFSGVSQLPGPVPTSGVTDTQNTVNMAQADTEKLRQRQKLREIILQQQQQKKIAGRQEKGSQDSPAVPHPGPLQHWQPENVNQAFTRPPPPYPGNIRSPVAPPLGPRYAVFPKDQRGPYPPDVASMGMRPHGFRFGFPGGSHGTMPSQERFLVPPQQIQGSGVSPQLRRSVSVDMPRPLNNSQMNNPVGLPQHFSPQSLPVQQHNILGQAYIELRHRAPDGRQRLPFSAPPGSVVEASSNLRHGNFIPRPDFPGPRHTDPMRRPPQGLPNQLPVHPDLEQVPPSQQEQGHSVHSSSMVMRTLNHPLGGEFSEAPLSTSVPSETTSDNLQITTQPSDGLEEKLDSDDPSVKELDVKDLEGVEVKDLDDEDLENLNLDTEDGKVVELDTLDNLETNDPNLDDLLRSGEFDIIAYTDPELDMGDKKSMFNEELDLPIDDKLDNQCVSVEPKKKEQENKTLVLSDKHSPQKKSTVTNEVKTEVLSPNSKVESKCETEKNDENKDNVDTPCSQASAHSDLNDGEKTSLHPCDPDLFEKRTNRETAGPSANVIQASTQLPAQDVINSCGITGSTPVLSSLLANEKSDNSDIRPSGSPPPPTLPASPSNHVSSLPPFIAPPGRVLDNAMNSNVTVVSRVNHVFSQGVQVNPGLIPGQSTVNHSLGTGKPATQTGPQTSQSGTSSMSGPQQLMIPQTLAQQNRERPLLLEEQPLLLQDLLDQERQEQQQQRQMQAMIRQRSEPFFPNIDFDAITDPIMKAKMVALKGINKVMAQNNLGMPPMVMSRFPFMGQVVTGTQNSEGQNLGPQAIPQDGSITHQISRPNPPNFGPGFVNDSQRKQYEEWLQETQQLLQMQQKYLEEQIGAHRKSKKALSAKQRTAKKAGREFPEEDAEQLKHVTEQQSMVQKQLEQIRKQQKEHAELIEDYRIKQQQQCAMAPPTMMPSVQPQPPLIPGATPPTMSQPTFPMVPQQLQHQQHTTVISGHTSPVRMPSLPGWQPNSAPAHLPLNPPRIQPPIAQLPIKTCTPAPGTVSNANPQSGPPPRVEFDDNNPFSESFQERERKERLREQQERQRIQLMQEVDRQRALQQRMEMEQHGMVGSEISSSRTSVSQIPFYSSDLPCDFMQPLGPLQQSPQHQQQMGQVLQQQNIQQGSINSPSTQTFMQTNERRQVGPPSFVPDSPSIPVGSPNFSSVKQGHGNLSGTSFQQSPVRPSFTPALPAAPPVANSSLPCGQDSTITHGHSYPGSTQSLIQLYSDIIPEEKGKKKRTRKKKRDDDAESTKAPSTPHSDITAPPTPGISETTSTPAVSTPSELPQQADQESVEPVGPSTPNMAAGQLCTELENKLPNSDFSQATPNQQTYANSEVDKLSMETPAKTEEIKLEKAETESCPGQEEPKLEEQNGSKVEGNAVACPVSSAQSPPHSAGAPAAKGDSGNELLKHLLKNKKSSSLLNQKPEGSICSEDDCTKDNKLVEKQNPAEGLQTLGAQMQGGFGCGNQLPKTDGGSETKKQRSKRTQRTGEKAAPRSKKRKKDEEEKQAMYSSTDTFTHLKQQNNLSNPPTPPASLPPTPPPMACQKMANGFATTEELAGKAGVLVSHEVTKTLGPKPFQLPFRPQDDLLARALAQGPKTVDVPASLPTPPHNNQEELRIQDHCGDRDTPDSFVPSSSPESVVGVEVSRYPDLSLVKEEPPEPVPSPIIPILPSTAGKSSESRRNDIKTEPGTLYFASPFGPSPNGPRSGLISVAITLHPTAAENISSVVAAFSDLLHVRIPNSYEVSSAPDVPSMGLVSSHRINPGLEYRQHLLLRGPPPGSANPPRLVSSYRLKQPNVPFPPTSNGLSGYKDSSHGIAESAALRPQWCCHCKVVILGSGVRKSFKDLTLLNKDSRESTKRVEKDIVFCSNNCFILYSSTAQAKNSENKESIPSLPQSPMRETPSKAFHQYSNNISTLDVHCLPQLPEKASPPASPPIAFPPAFEAAQVEAKPDELKVTVKLKPRLRAVHGGFEDCRPLNKKWRGMKWKKWSIHIVIPKGTFKPPCEDEIDEFLKKLGTSLKPDPVPKDYRKCCFCHEEGDGLTDGPARLLNLDLDLWVHLNCALWSTEVYETQAGALINVELALRRGLQMKCVFCHKTGATSGCHRFRCTNIYHFTCAIKAQCMFFKDKTMLCPMHKPKGIHEQELSYFAVFRRVYVQRDEVRQIASIVQRGERDHTFRVGSLIFHTIGQLLPQQMQAFHSPKALFPVGYEASRLYWSTRYANRRCRYLCSIEEKDGRPVFVIRIVEQGHEDLVLSDISPKGVWDKILEPVACVRKKSEMLQLFPAYLKGEDLFGLTVSAVARIAESLPGVEACENYTFRYGRNPLMELPLAVNPTGCARSEPKMSAHVKRFVLRPHTLNSTSTSKSFQSTVTGELNAPYSKQFVHSKSSQYRKMKTEWKSNVYLARSRIQGLGLYAARDIEKHTMVIEYIGTIIRNEVANRKEKLYESQNRGVYMFRMDNDHVIDATLTGGPARYINHSCAPNCVAEVVTFERGHKIIISSSRRIQKGEELCYDYKFDFEDDQHKIPCHCGAVNCRKWMN.

The segment at 1–101 (MSSEEDKSVE…EDAEAEVDNS (101 aa)) is disordered. Residues 12-28 (PQPPPPPPEEPGAPAPS) show a composition bias toward pro residues. 2 positions are modified to phosphoserine: serine 28 and serine 46. A DNA-binding region (a.T hook) is located at residues 34 to 46 (KRPRGRPRKDGAS). Residues 50–59 (RARKKPRSRG) are compositionally biased toward basic residues. Residues 64 to 81 (EDEDSMDGLETTETETIV) are compositionally biased toward acidic residues. Position 89 is a phosphoserine (serine 89). The stretch at 92 to 112 (EDAEAEVDNSKQLIPTLQRSV) forms a coiled coil. Serine 113 carries the phosphoserine modification. The segment at 164-203 (RNQPSNKKDIDDNSNGTYEKMQNSAPRKQRGQRKERSPQQ) is disordered. Residues 176–189 (NSNGTYEKMQNSAP) show a composition bias toward polar residues. Residue serine 200 is modified to Phosphoserine. The segment at 227-262 (ELSLVGLPDAIDIQALFDSTGTCWAHHRCVEWSLGV) adopts a C2HC pre-PHD-type 1; degenerate zinc-finger fold. 4 consecutive PHD-type zinc fingers follow at residues 283-331 (ERCA…PEHI), 341-391 (DANC…CKVC), 388-438 (CKVC…CRIC), and 464-520 (DNLC…CKHL). The RING-type zinc finger occupies 344-389 (CAVCDSPGDLLDQFFCTTCGQHYHGMCLDIAVTPLKRAGWQCPECK). One can recognise a DHHC domain in the interval 436 to 489 (RICIECGTRSSSQWHHNCLICDNCYQQQDNLCPFCGKCYHPELQKDMLHCNMCK). Positions 644–672 (EDKMEVTENIEVVTHQITVQQEQLQLLEE) form a coiled coil. A compositionally biased stretch (basic and acidic residues) spans 721 to 730 (QGEKEQKENS). The tract at residues 721–742 (QGEKEQKENSELSTGLMDSEMT) is disordered. Lysine 758 is modified (N6-acetyllysine). Positions 763–791 (SSETESSFSSSADISKADVSSSPTPSSDL) are enriched in low complexity. 3 disordered regions span residues 763 to 798 (SSETESSFSSSADISKADVSSSPTPSSDLPSHDMLH), 828 to 864 (PAITKRKFSPGRPRSKQGAWSTHNTVSPPSWSPDISE), and 885 to 912 (GRGSGFPGKRRPRGAGLSGRGGRGRSKL). Over residues 830-842 (ITKRKFSPGRPRS) the composition is skewed to basic residues. Polar residues predominate over residues 845-856 (GAWSTHNTVSPP). Phosphoserine is present on serine 854. 3 PHD-type zinc fingers span residues 957-1010 (QDMC…CTVC), 1007-1057 (CTVC…CVWC), and 1084-1139 (LSSC…CRPY). A disordered region spans residues 1215 to 1324 (AVLQTPPDIQ…LPCRDDGWSE (110 aa)). The segment covering 1224–1270 (QSEHSRDGEMDDSREGELMDCDGKSESSPEREAVDDETKGVEGTDGV) has biased composition (basic and acidic residues). Serine 1301 carries the phosphoserine modification. Positions 1338 to 1366 (TESTEKIKKRYRKRKNKLEETFPAYLQEA) form a coiled coil. A compositionally biased stretch (low complexity) spans 1406 to 1416 (PSLDPLLSSSS). 2 disordered regions span residues 1406–1431 (PSLDPLLSSSSAPTKSGTHGPADDPL) and 1458–1485 (HSDIGPVTDDPSSLPQPNVNQSSRPLSE). A compositionally biased stretch (polar residues) spans 1467 to 1482 (DPSSLPQPNVNQSSRP). N6-acetyllysine is present on lysine 1508. 2 disordered regions span residues 1604–1630 (FNPMASDPNNSWTSSAPTVEGENDTMS) and 1709–2448 (VQMS…SPVA). 2 stretches are compositionally biased toward polar residues: residues 1610–1620 (DPNNSWTSSAP) and 1709–1727 (VQMSNDSMKRQQQQDSIDP). Over residues 1729–1753 (SRIDSELFKDPLKQRESEHEQEWKF) the composition is skewed to basic and acidic residues. The stretch at 1754 to 1787 (RQQMRQKSKQQAKIEATQKLEQVKNEQQQQQQQQ) forms a coiled coil. An N6-acetyllysine modification is found at lysine 1772. The segment covering 1788 to 1823 (FGSQHLLVQSGSDTPSSGIQSPLTPQPGNGNMSPAQ) has biased composition (polar residues). The span at 1851–1860 (QAPPPPPAPS) shows a compositional bias: pro residues. The segment covering 1861 to 1875 (RIPIQDSLSQAQTSQ) has biased composition (low complexity). The segment covering 1927–1945 (TPLSSVSRPLQMNETTANR) has biased composition (polar residues). A Phosphoserine modification is found at serine 1987. At lysine 2009 the chain carries N6-acetyllysine. 4 stretches are compositionally biased toward polar residues: residues 2054 to 2065 (QDPYGSVSQASR), 2085 to 2094 (FSHNQSNDPY), 2115 to 2131 (AFSQPGTISRPTSQDPY), and 2144 to 2159 (SYSQSSGTARSNTDPY). Positions 2173 to 2187 (PYSQQPQTPRPSTQT) are enriched in low complexity. Composition is skewed to polar residues over residues 2302–2319 (SPMTPRSQSDSFGTSQTA), 2335–2353 (CASSNSPMHSQGQQFSGVS), and 2362–2375 (SGVTDTQNTVNMAQ). Residues 2377-2389 (DTEKLRQRQKLRE) are compositionally biased toward basic and acidic residues. Residues 2390–2399 (IILQQQQQKK) show a composition bias toward low complexity. Asymmetric dimethylarginine occurs at positions 2454 and 2571. Disordered stretches follow at residues 2589–2694 (RHGN…SDDP), 2793–2887 (EPKK…RETA), 2925–2954 (EKSDNSDIRPSGSPPPPTLPASPSNHVSSL), and 2989–3029 (VNPG…SGPQ). 2 stretches are compositionally biased toward polar residues: residues 2629 to 2645 (PPSQQEQGHSVHSSSMV) and 2661 to 2682 (PLSTSVPSETTSDNLQITTQPS). Over residues 2793–2811 (EPKKKEQENKTLVLSDKHS) the composition is skewed to basic and acidic residues. Residues lysine 2802 and lysine 2809 each carry the N6-acetyllysine modification. Positions 2814-2832 (KKSTVTNEVKTEVLSPNSK) are enriched in polar residues. Serine 2828 carries the post-translational modification Phosphoserine. Lysine 2832 carries the N6-acetyllysine modification. Positions 2833–2849 (VESKCETEKNDENKDNV) are enriched in basic and acidic residues. Residues 2851–2860 (TPCSQASAHS) show a composition bias toward polar residues. The span at 2861–2884 (DLNDGEKTSLHPCDPDLFEKRTNR) shows a compositional bias: basic and acidic residues. Residue lysine 2867 is modified to N6-acetyllysine. The span at 3011–3029 (TQTGPQTSQSGTSSMSGPQ) shows a compositional bias: low complexity. Coiled coils occupy residues 3054–3081 (LLQDLLDQERQEQQQQRQMQAMIRQRSE), 3173–3272 (NDSQ…QQQQ), and 3391–3433 (FSES…EMEQ). Residues 3205–3221 (HRKSKKALSAKQRTAKK) are compositionally biased toward basic residues. Disordered stretches follow at residues 3205–3241 (HRKSKKALSAKQRTAKKAGREFPEEDAEQLKHVTEQQ), 3353–3409 (PPIA…EQQE), 3527–3583 (PNFS…HSYP), 3596–3919 (IIPE…MANG), and 4024–4053 (VKEEPPEPVPSPIIPILPSTAGKSSESRRN). 2 stretches are compositionally biased toward basic and acidic residues: residues 3222–3238 (AGREFPEEDAEQLKHVT) and 3395–3409 (FQERERKERLREQQE). Composition is skewed to polar residues over residues 3527-3549 (PNFSSVKQGHGNLSGTSFQQSPV), 3564-3583 (ANSSLPCGQDSTITHGHSYP), 3637-3658 (ISETTSTPAVSTPSELPQQADQ), and 3684-3701 (LPNSDFSQATPNQQTYAN). Positions 3703-3725 (EVDKLSMETPAKTEEIKLEKAET) are enriched in basic and acidic residues. N6-acetyllysine is present on lysine 3714. Serine 3758 is subject to Phosphoserine. The span at 3803–3812 (DCTKDNKLVE) shows a compositional bias: basic and acidic residues. A compositionally biased stretch (polar residues) spans 3878-3892 (MYSSTDTFTHLKQQN). The segment covering 3897 to 3911 (PPTPPASLPPTPPPM) has biased composition (pro residues). Position 4034 is a phosphoserine (serine 4034). Arginine 4139 is modified (asymmetric dimethylarginine). Position 4267 is a phosphoserine (serine 4267). The segment at 4399–4439 (YRKCCFCHEEGDGLTDGPARLLNLDLDLWVHLNCALWSTEV) adopts a C2HC pre-PHD-type 2 zinc-finger fold. The PHD-type 8 zinc-finger motif lies at 4460 to 4507 (MKCVFCHKTGATSGCHRFRCTNIYHFTCAIKAQCMFFKDKTMLCPMHK). In terms of domain architecture, FYR N-terminal spans 4545–4605 (DHTFRVGSLI…CRYLCSIEEK (61 aa)). The 86-residue stretch at 4606-4691 (DGRPVFVIRI…EACENYTFRY (86 aa)) folds into the FYR C-terminal domain. The WDR5 interaction motif (WIN) signature appears at 4707–4712 (GCARSE). Residues 4771–4887 (SNVYLARSRI…KGEELCYDYK (117 aa)) form the SET domain. S-adenosyl-L-methionine-binding positions include tyrosine 4825 and 4848–4849 (NH). Zn(2+)-binding residues include cysteine 4851, cysteine 4899, cysteine 4901, and cysteine 4906. Positions 4895-4911 (HKIPCHCGAVNCRKWMN) constitute a Post-SET domain.

Belongs to the class V-like SAM-binding methyltransferase superfamily. Histone-lysine methyltransferase family. TRX/MLL subfamily. As to quaternary structure, component of the MLL3 complex (also named ASCOM complex), at least composed of catalytic subunit KMT2C/MLL3, ASH2L, RBBP5, WDR5, NCOA6, DPY30, KDM6A, PAXIP1/PTIP, PAGR1 and alpha- and beta-tubulin. Forms a core complex with the evolutionary conserved subcomplex WRAD composed of WDR5, RBBP5, ASH2L/ASH2 and DPY30 subunits; WRAD differentially stimulates the methyltransferase activity. Interacts (via WIN motif) with WDR5. In terms of tissue distribution, highly expressed in testis and ovary, followed by brain and liver. Also expressed in placenta, peripherical blood, fetal thymus, heart, lung and kidney. Within brain, expression was highest in hippocampus, caudate nucleus, and substantia nigra. Not detected in skeletal muscle and fetal liver.

Its subcellular location is the nucleus. The enzyme catalyses L-lysyl(4)-[histone H3] + S-adenosyl-L-methionine = N(6)-methyl-L-lysyl(4)-[histone H3] + S-adenosyl-L-homocysteine + H(+). Functionally, histone methyltransferase that catalyzes methyl group transfer from S-adenosyl-L-methionine to the epsilon-amino group of 'Lys-4' of histone H3 (H3K4). Part of chromatin remodeling machinery predominantly forms H3K4me1 methylation marks at active chromatin sites where transcription and DNA repair take place. Likely plays a redundant role with KMT2D in enriching H3K4me1 mark on primed and active enhancer elements. This chain is Histone-lysine N-methyltransferase 2C (KMT2C), found in Homo sapiens (Human).